The primary structure comprises 95 residues: Protein TusB (95 aa).

This sequence belongs to the DsrH/TusB family. Heterohexamer, formed by a dimer of trimers. The hexameric TusBCD complex contains 2 copies each of TusB, TusC and TusD. The TusBCD complex interacts with TusE.

The protein localises to the cytoplasm. Its function is as follows. Part of a sulfur-relay system required for 2-thiolation of 5-methylaminomethyl-2-thiouridine (mnm(5)s(2)U) at tRNA wobble positions. The sequence is that of Protein TusB from Serratia proteamaculans (strain 568).